A 332-amino-acid polypeptide reads, in one-letter code: L-lactate dehydrogenase A chain (332 aa).

NAD(+) is bound by residues 29–57 (GMVG…MEDK) and R99. 3 residues coordinate substrate: R106, N138, and R169. N138 is an NAD(+) binding site. Residue H193 is the Proton acceptor of the active site. T248 contacts substrate.

The protein belongs to the LDH/MDH superfamily. LDH family. As to quaternary structure, homotetramer.

It localises to the cytoplasm. The catalysed reaction is (S)-lactate + NAD(+) = pyruvate + NADH + H(+). Its pathway is fermentation; pyruvate fermentation to lactate; (S)-lactate from pyruvate: step 1/1. Interconverts simultaneously and stereospecifically pyruvate and lactate with concomitant interconversion of NADH and NAD(+). The chain is L-lactate dehydrogenase A chain (ldha) from Gillichthys seta (Shortjaw mudsucker).